An 884-amino-acid chain; its full sequence is DNA mismatch repair protein MutS (884 aa).

ATP is bound at residue 651–658 (GPNMSGKS). A disordered region spans residues 843 to 884 (LRNQGKSQPAQKNCKKEPAPNRSPDPAVGDQLSLIPAPLFPD).

This sequence belongs to the DNA mismatch repair MutS family.

Functionally, this protein is involved in the repair of mismatches in DNA. It is possible that it carries out the mismatch recognition step. This protein has a weak ATPase activity. This is DNA mismatch repair protein MutS from Synechococcus sp. (strain JA-2-3B'a(2-13)) (Cyanobacteria bacterium Yellowstone B-Prime).